The chain runs to 170 residues: uncharacterized protein (170 aa).

One can recognise a VOC domain in the interval 25–151 (PALSPHLVVD…FGHHWSLGQP (127 aa)).

This is an uncharacterized protein from Mycobacterium tuberculosis (strain CDC 1551 / Oshkosh).